A 144-amino-acid polypeptide reads, in one-letter code: Small ribosomal subunit protein eS10A (144 aa).

Positions 90 to 144 (THKRQVRPTAPRAGRPEPRERASADAGYRRAEKKDEGAAPSGFAPSFRGGFGRPQ) are disordered. The segment covering 103–126 (GRPEPRERASADAGYRRAEKKDEG) has biased composition (basic and acidic residues).

It belongs to the eukaryotic ribosomal protein eS10 family. Component of the small ribosomal subunit (SSU). Mature yeast ribosomes consist of a small (40S) and a large (60S) subunit. The 40S small subunit contains 1 molecule of ribosomal RNA (18S rRNA) and at least 33 different proteins. The large 60S subunit contains 3 rRNA molecules (25S, 5.8S and 5S rRNA) and at least 46 different proteins. eS10 interacts with GCN1 (via middle region); this interaction is direct and promotes GCN2 kinase activity.

It is found in the cytoplasm. Functionally, component of the ribosome, a large ribonucleoprotein complex responsible for the synthesis of proteins in the cell. The small ribosomal subunit (SSU) binds messenger RNAs (mRNAs) and translates the encoded message by selecting cognate aminoacyl-transfer RNA (tRNA) molecules. The large subunit (LSU) contains the ribosomal catalytic site termed the peptidyl transferase center (PTC), which catalyzes the formation of peptide bonds, thereby polymerizing the amino acids delivered by tRNAs into a polypeptide chain. The nascent polypeptides leave the ribosome through a tunnel in the LSU and interact with protein factors that function in enzymatic processing, targeting, and the membrane insertion of nascent chains at the exit of the ribosomal tunnel. eS10 plays a role as a positive regulator of the GCN2 kinase activity by stimulating GCN1-mediated GCN2 activation. The polypeptide is Small ribosomal subunit protein eS10A (rps1001) (Schizosaccharomyces pombe (strain 972 / ATCC 24843) (Fission yeast)).